A 308-amino-acid polypeptide reads, in one-letter code: Phenylcoumaran benzylic ether reductase 1 (308 aa).

NADP(+) is bound by residues 11–17 (GGTGYIG), R36, and R45. The active-site Proton acceptor is K133. Residue R137 coordinates NADP(+).

This sequence belongs to the NmrA-type oxidoreductase family. Isoflavone reductase subfamily. As to expression, expressed in apical meristem and cotyledon veins of young seedlings. Expressed in vascular tissues of roots, leaves, stems and petals. Expressed in pollen grains. Expressed at low levels in cauline leaves and siliques.

The catalysed reaction is (-)-dehydrodiconiferyl alcohol + NADPH + H(+) = (S)-isodihydrodehydrodiconiferyl alcohol + NADP(+). It carries out the reaction (+)-dehydrodiconiferyl alcohol + NADPH + H(+) = (R)-isodihydrodehydrodiconiferyl alcohol + NADP(+). The enzyme catalyses (2R,3S)-dihydrodehydrodiconiferyl alcohol + NADPH + H(+) = (S)-tetrahydrodehydrodiconiferyl alcohol + NADP(+). It catalyses the reaction (2S,3R)-dihydrodehydrodiconiferyl alcohol + NADPH + H(+) = (R)-tetrahydrodehydrodiconiferyl alcohol + NADP(+). Its function is as follows. Oxidoreductase involved in lignan biosynthesis. Catalyzes the NADPH-dependent reduction of phenylcoumaran benzylic ethers. Converts dehydrodiconiferyl alcohol (DDC) to isodihydrodehydrodiconiferyl alcohol (IDDDC), and dihydrodehydrodiconiferyl alcohol (DDDC) to tetrahydrodehydrodiconiferyl alcohol (TDDC). Plays an important role in the biosynthesis of secondary metabolites. In addition to the 8-5'-linked neolignan DDC, can reduce the 8-8'-linked lignans, pinoresinol, and lariciresinol, but with lower activities. The protein is Phenylcoumaran benzylic ether reductase 1 of Arabidopsis thaliana (Mouse-ear cress).